The sequence spans 236 residues: Small ribosomal subunit protein uS2c (236 aa).

The protein belongs to the universal ribosomal protein uS2 family.

The protein localises to the plastid. It is found in the chloroplast. This is Small ribosomal subunit protein uS2c (rps2) from Agrostis stolonifera (Creeping bentgrass).